The primary structure comprises 426 residues: Isovaleryl-CoA dehydrogenase, mitochondrial (426 aa).

The N-terminal 32 residues, 1–32 (MATAAWLLGRRVASWRMRPPLQSLAGLITQRT), are a transit peptide targeting the mitochondrion. An N6-acetyllysine; alternate mark is found at Lys-58 and Lys-78. N6-succinyllysine; alternate occurs at positions 58 and 78. FAD is bound by residues 165 to 174 (LAMSEPNAGS) and 198 to 200 (WIT). Ser-174 contributes to the substrate binding site. 222–223 (SR) provides a ligand contact to substrate. Lys-241 is subject to N6-acetyllysine. Substrate is bound by residues Tyr-277 and 284–287 (DLER). The active-site Proton acceptor is the Glu-286. Arg-312 contributes to the FAD binding site. Lys-318 carries the post-translational modification N6-succinyllysine. FAD is bound by residues Gln-323 and 380–384 (QCLGG). 407–408 (AG) contacts substrate. 409–411 (TSE) contributes to the FAD binding site.

The protein belongs to the acyl-CoA dehydrogenase family. Homotetramer. FAD is required as a cofactor.

The protein resides in the mitochondrion matrix. The catalysed reaction is 3-methylbutanoyl-CoA + oxidized [electron-transfer flavoprotein] + H(+) = 3-methylbut-2-enoyl-CoA + reduced [electron-transfer flavoprotein]. It catalyses the reaction pentanoyl-CoA + oxidized [electron-transfer flavoprotein] + H(+) = (2E)-pentenoyl-CoA + reduced [electron-transfer flavoprotein]. The enzyme catalyses hexanoyl-CoA + oxidized [electron-transfer flavoprotein] + H(+) = (2E)-hexenoyl-CoA + reduced [electron-transfer flavoprotein]. It carries out the reaction butanoyl-CoA + oxidized [electron-transfer flavoprotein] + H(+) = (2E)-butenoyl-CoA + reduced [electron-transfer flavoprotein]. It participates in amino-acid degradation; L-leucine degradation; (S)-3-hydroxy-3-methylglutaryl-CoA from 3-isovaleryl-CoA: step 1/3. Catalyzes the conversion of isovaleryl-CoA/3-methylbutanoyl-CoA to 3-methylbut-2-enoyl-CoA as an intermediate step in the leucine (Leu) catabolic pathway. To a lesser extent, is also able to catalyze the oxidation of other saturated short-chain acyl-CoA thioesters as pentanoyl-CoA, hexenoyl-CoA and butenoyl-CoA. The polypeptide is Isovaleryl-CoA dehydrogenase, mitochondrial (IVD) (Bos taurus (Bovine)).